Consider the following 306-residue polypeptide: MMLNEMNKSLEGVDIRINEPLKKYTYTKVGGPADFLAFPRNRYELARIVKFANQNNLPWMVLGNASNLIVRDGGIRGFVIMFDKLNAVTVDGYVIEAEAGSNLIETTKVAQYHSLTGFEFACGIPGSIGGAVFMNAGAYGGEISHILISAQVLTRDGEIKTIEARDMRFGYRHSVLQDNQEVVVSAKFSLKPGDYTIISQEMQRLNHLRALKQPLEHPSCGSVFKRPLGHFAGQLIMEAQLMGHRIGGVEVSTKHAGFMVNVANGSAKNYEDLIADVIHRVKENSGVTLEPEVRIIGEKEVQMEDS.

An FAD-binding PCMH-type domain is found at 28–193; that stretch reads KVGGPADFLA…VSAKFSLKPG (166 aa). The active site involves Arg-172. Residue Ser-222 is the Proton donor of the active site. Residue Glu-292 is part of the active site.

This sequence belongs to the MurB family. It depends on FAD as a cofactor.

The protein resides in the cytoplasm. It carries out the reaction UDP-N-acetyl-alpha-D-muramate + NADP(+) = UDP-N-acetyl-3-O-(1-carboxyvinyl)-alpha-D-glucosamine + NADPH + H(+). The protein operates within cell wall biogenesis; peptidoglycan biosynthesis. Its function is as follows. Cell wall formation. This is UDP-N-acetylenolpyruvoylglucosamine reductase from Streptococcus mutans serotype c (strain ATCC 700610 / UA159).